The sequence spans 196 residues: Small ribosomal subunit protein uS4c (196 aa).

A disordered region spans residues 17–38 (ALPGLTRKTPKSRSNLKKKFHS). A compositionally biased stretch (basic residues) spans 24–38 (KTPKSRSNLKKKFHS). The region spanning 89 to 169 (MRLDNILFRL…LPKHLTIDTL (81 aa)) is the S4 RNA-binding domain.

Belongs to the universal ribosomal protein uS4 family. Part of the 30S ribosomal subunit. Contacts protein S5. The interaction surface between S4 and S5 is involved in control of translational fidelity.

The protein localises to the plastid. Its subcellular location is the chloroplast. In terms of biological role, one of the primary rRNA binding proteins, it binds directly to 16S rRNA where it nucleates assembly of the body of the 30S subunit. Functionally, with S5 and S12 plays an important role in translational accuracy. This Lygeum spartum protein is Small ribosomal subunit protein uS4c (rps4).